The sequence spans 284 residues: 4-diphosphocytidyl-2-C-methyl-D-erythritol kinase (284 aa).

Residue K14 is part of the active site. Residue 98-108 (PMGGGLGGGSS) coordinates ATP. D140 is a catalytic residue.

Belongs to the GHMP kinase family. IspE subfamily.

It carries out the reaction 4-CDP-2-C-methyl-D-erythritol + ATP = 4-CDP-2-C-methyl-D-erythritol 2-phosphate + ADP + H(+). It functions in the pathway isoprenoid biosynthesis; isopentenyl diphosphate biosynthesis via DXP pathway; isopentenyl diphosphate from 1-deoxy-D-xylulose 5-phosphate: step 3/6. Catalyzes the phosphorylation of the position 2 hydroxy group of 4-diphosphocytidyl-2C-methyl-D-erythritol. This chain is 4-diphosphocytidyl-2-C-methyl-D-erythritol kinase, found in Shewanella oneidensis (strain ATCC 700550 / JCM 31522 / CIP 106686 / LMG 19005 / NCIMB 14063 / MR-1).